We begin with the raw amino-acid sequence, 513 residues long: L-threonine dehydratase biosynthetic IlvA (513 aa).

Lys-61 bears the N6-(pyridoxal phosphate)lysine mark. Residues Asn-88, 187 to 191 (GGGGL), and Ser-314 contribute to the pyridoxal 5'-phosphate site. 2 ACT-like domains span residues 338 to 409 (ALLA…DLSN) and 432 to 504 (RLYS…DVTE).

The protein belongs to the serine/threonine dehydratase family. Homotetramer. Pyridoxal 5'-phosphate is required as a cofactor.

It carries out the reaction L-threonine = 2-oxobutanoate + NH4(+). Its pathway is amino-acid biosynthesis; L-isoleucine biosynthesis; 2-oxobutanoate from L-threonine: step 1/1. Functionally, catalyzes the anaerobic formation of alpha-ketobutyrate and ammonia from threonine in a two-step reaction. The first step involved a dehydration of threonine and a production of enamine intermediates (aminocrotonate), which tautomerizes to its imine form (iminobutyrate). Both intermediates are unstable and short-lived. The second step is the nonenzymatic hydrolysis of the enamine/imine intermediates to form 2-ketobutyrate and free ammonia. In the low water environment of the cell, the second step is accelerated by RidA. The chain is L-threonine dehydratase biosynthetic IlvA (ilvA) from Pasteurella multocida (strain Pm70).